The following is a 180-amino-acid chain: Large ribosomal subunit protein uL5 (180 aa).

It belongs to the universal ribosomal protein uL5 family. Part of the 50S ribosomal subunit; part of the 5S rRNA/L5/L18/L25 subcomplex. Contacts the 5S rRNA and the P site tRNA. Forms a bridge to the 30S subunit in the 70S ribosome.

This is one of the proteins that bind and probably mediate the attachment of the 5S RNA into the large ribosomal subunit, where it forms part of the central protuberance. In the 70S ribosome it contacts protein S13 of the 30S subunit (bridge B1b), connecting the 2 subunits; this bridge is implicated in subunit movement. Contacts the P site tRNA; the 5S rRNA and some of its associated proteins might help stabilize positioning of ribosome-bound tRNAs. The polypeptide is Large ribosomal subunit protein uL5 (Ralstonia pickettii (strain 12J)).